The sequence spans 310 residues: Methionyl-tRNA formyltransferase (310 aa).

Position 111 to 114 (111 to 114 (SLLP)) interacts with (6S)-5,6,7,8-tetrahydrofolate.

This sequence belongs to the Fmt family.

It carries out the reaction L-methionyl-tRNA(fMet) + (6R)-10-formyltetrahydrofolate = N-formyl-L-methionyl-tRNA(fMet) + (6S)-5,6,7,8-tetrahydrofolate + H(+). Attaches a formyl group to the free amino group of methionyl-tRNA(fMet). The formyl group appears to play a dual role in the initiator identity of N-formylmethionyl-tRNA by promoting its recognition by IF2 and preventing the misappropriation of this tRNA by the elongation apparatus. The sequence is that of Methionyl-tRNA formyltransferase from Rhodopseudomonas palustris (strain BisB5).